A 709-amino-acid polypeptide reads, in one-letter code: Myotubularin-related protein 11 (709 aa).

The segment at 1–39 (MWWGGRGQSFNIAPQKEEPEMGSVQENRMPEPRSRQPSS) is disordered. The Myotubularin phosphatase domain maps to 196 to 639 (METAEDWETE…PQIRLWRRCY (444 aa)).

The protein belongs to the protein-tyrosine phosphatase family. Non-receptor class myotubularin subfamily. Expressed in bone marrow, spleen and thymus.

The polypeptide is Myotubularin-related protein 11 (MTMR11) (Homo sapiens (Human)).